Here is a 352-residue protein sequence, read N- to C-terminus: Ion-translocating oxidoreductase complex subunit D (352 aa).

4 consecutive transmembrane segments (helical) span residues 20-40 (IMLL…WFFG), 42-62 (GTLV…ALVL), 89-109 (IPPL…VIIA), and 123-143 (PAMI…TSWL). The residue at position 187 (threonine 187) is an FMN phosphoryl threonine. A run of 5 helical transmembrane segments spans residues 214 to 234 (ILAG…GLWL), 242 to 262 (WHIP…GWLF), 267 to 287 (LAAP…FFIL), 301 to 321 (LIFG…GGYP), and 322 to 342 (DGVA…DYYT).

This sequence belongs to the NqrB/RnfD family. As to quaternary structure, the complex is composed of six subunits: RsxA, RsxB, RsxC, RsxD, RsxE and RsxG. FMN serves as cofactor.

Its subcellular location is the cell inner membrane. Part of a membrane-bound complex that couples electron transfer with translocation of ions across the membrane. Required to maintain the reduced state of SoxR. The sequence is that of Ion-translocating oxidoreductase complex subunit D from Shigella sonnei (strain Ss046).